Reading from the N-terminus, the 223-residue chain is DNA mismatch repair protein MutH (223 aa).

It belongs to the MutH family.

The protein resides in the cytoplasm. In terms of biological role, sequence-specific endonuclease that cleaves unmethylated GATC sequences. It is involved in DNA mismatch repair. This is DNA mismatch repair protein MutH from Shewanella sp. (strain ANA-3).